The chain runs to 74 residues: ATP synthase subunit c (74 aa).

2 consecutive transmembrane segments (helical) span residues 5-25 (LAHI…IGVG) and 49-69 (LFIG…VALL).

Belongs to the ATPase C chain family. F-type ATPases have 2 components, F(1) - the catalytic core - and F(0) - the membrane proton channel. F(1) has five subunits: alpha(3), beta(3), gamma(1), delta(1), epsilon(1). F(0) has three main subunits: a(1), b(2) and c(10-14). The alpha and beta chains form an alternating ring which encloses part of the gamma chain. F(1) is attached to F(0) by a central stalk formed by the gamma and epsilon chains, while a peripheral stalk is formed by the delta and b chains.

Its subcellular location is the cell inner membrane. In terms of biological role, f(1)F(0) ATP synthase produces ATP from ADP in the presence of a proton or sodium gradient. F-type ATPases consist of two structural domains, F(1) containing the extramembraneous catalytic core and F(0) containing the membrane proton channel, linked together by a central stalk and a peripheral stalk. During catalysis, ATP synthesis in the catalytic domain of F(1) is coupled via a rotary mechanism of the central stalk subunits to proton translocation. Functionally, key component of the F(0) channel; it plays a direct role in translocation across the membrane. A homomeric c-ring of between 10-14 subunits forms the central stalk rotor element with the F(1) delta and epsilon subunits. The polypeptide is ATP synthase subunit c (Ruegeria pomeroyi (strain ATCC 700808 / DSM 15171 / DSS-3) (Silicibacter pomeroyi)).